The following is a 376-amino-acid chain: MLNFELITTDGNARRGRVTLNHGVVETPIFMPVGTYGSVKAMSPLELNEIGAHIILGNTFHLWLRPGLDVVNAHEGLHKFIGWDKPILTDSGGFQVFSLGDLRKITEDGVTFASPVNGDKLFLSPEISMQIQRTLNSDIVMQFDECTPYEIDGRAATHEEAAKSMRMSLRWAKRSRDEFERLANPNALFGIVQGGMYEDLRDESLAGLSELDFHGFAIGGLSVGEPKEDMMRVLEHVAPRLPAHKPHYLMGVGTPEDLVAGVAAGVDMFDCVMPTRNARNGWLFTRFGDVKIKNAAHRNDPRPLDESCACYTCRNFSRAYLHHLHRVGEILGARLNTIHNLHYYLQLMREMREAIEHHRFADFRRQFAADRARGTQ.

D90 functions as the Proton acceptor in the catalytic mechanism. Substrate contacts are provided by residues 90 to 94, D144, Q193, and G220; that span reads DSGGF. Residues 251–257 are RNA binding; it reads GVGTPED. The active-site Nucleophile is the D270. Residues 275 to 279 are RNA binding; important for wobble base 34 recognition; sequence TRNAR. 4 residues coordinate Zn(2+): C308, C310, C313, and H339.

It belongs to the queuine tRNA-ribosyltransferase family. As to quaternary structure, homodimer. Within each dimer, one monomer is responsible for RNA recognition and catalysis, while the other monomer binds to the replacement base PreQ1. The cofactor is Zn(2+).

The enzyme catalyses 7-aminomethyl-7-carbaguanine + guanosine(34) in tRNA = 7-aminomethyl-7-carbaguanosine(34) in tRNA + guanine. Its pathway is tRNA modification; tRNA-queuosine biosynthesis. In terms of biological role, catalyzes the base-exchange of a guanine (G) residue with the queuine precursor 7-aminomethyl-7-deazaguanine (PreQ1) at position 34 (anticodon wobble position) in tRNAs with GU(N) anticodons (tRNA-Asp, -Asn, -His and -Tyr). Catalysis occurs through a double-displacement mechanism. The nucleophile active site attacks the C1' of nucleotide 34 to detach the guanine base from the RNA, forming a covalent enzyme-RNA intermediate. The proton acceptor active site deprotonates the incoming PreQ1, allowing a nucleophilic attack on the C1' of the ribose to form the product. After dissociation, two additional enzymatic reactions on the tRNA convert PreQ1 to queuine (Q), resulting in the hypermodified nucleoside queuosine (7-(((4,5-cis-dihydroxy-2-cyclopenten-1-yl)amino)methyl)-7-deazaguanosine). This is Queuine tRNA-ribosyltransferase from Cupriavidus necator (strain ATCC 17699 / DSM 428 / KCTC 22496 / NCIMB 10442 / H16 / Stanier 337) (Ralstonia eutropha).